A 694-amino-acid chain; its full sequence is MIAHFLCILSYNVNTFVILNVYTKLTMFCTTNSLPMDLLLKQGSLKQEVESFCYQIVSESHDQKVGILQSEDEHLQPSVSKNSEGELSRVKFISNSNKITTFSKKPKRRKYDESYLSFGFTYFGNRDAPHAQCVLCKKILSNSSLAPSKLRRHLETKHAAYKDKDISFFKQHLDSPENNKPPTPKIVNTDNESATEASYNVSYHIALSGEAHTIGELLIKPCAKDVVMRMFDEQYSKKIDAVQLSNSTVARRIKDLAADIEEELVCRLKICDGFSLQLDESADVSGLAVLLVFVRYRFNKSIEEDLLLCESLQSNATGEEIFNCINSFMQKHEIEWEKCVDVCSDASRAMDGKIAEAVTLIKYVAPESTSSHCLLYRHALAVKTMPTSLKNVLDQAVQIINYIKARPHQSRLLKILCEEMGAQHTALLLNTEVRWLSRGKVLVRLFELRRELLVFMDSAFRLSDCLTNSSWLLRLAYLADIFTKLNEVNLSMQGKNVTVFTVFDKMSSLLRKLEFWASSVEEENFDCFPTLSDFLTEINSTVDKNICSAIVQHLRGLRSTLLKYFPVTNDIHAWVRNPFTVTVKPASLVARDYESLIDLTSDSQVKQSFSELSLNDFWSSLIQEYPSVARRAVRVLLPFATMHLCETGFSYYAATKTKYRKRLDAAPHMRIRLSNITPNIKRICDKKTQKHCSH.

Residues 109 to 165 form a BED-type zinc finger; it reads RKYDESYLSFGFTYFGNRDAPHAQCVLCKKILSNSSLAPSKLRRHLETKHAAYKDKD. The Zn(2+) site is built by cysteine 133, cysteine 136, histidine 153, and histidine 158.

This chain is Zinc finger BED domain-containing protein 5 (ZBED5), found in Bos taurus (Bovine).